A 314-amino-acid polypeptide reads, in one-letter code: Taste receptor type 2 member 42 (314 aa).

The Extracellular portion of the chain corresponds to 1–7 (MATELDK). The helical transmembrane segment at 8–28 (IFLTLAIVEFIIGMLGNVFIG) threads the bilayer. Residues 29 to 50 (LANCSEGIKNQKVFSVDFILTC) lie on the Cytoplasmic side of the membrane. A helical transmembrane segment spans residues 51 to 71 (LAISTIGHLLVILFDSHVAGL). At 72–101 (APHLYATDRVVRPVTVLWHMTNHLTTWLAT) the chain is on the extracellular side. Residues 102–122 (CLSIFYFFKIAHFPHSLFLWL) form a helical membrane-spanning segment. The Cytoplasmic segment spans residues 123 to 127 (RWRMN). The helical transmembrane segment at 128–148 (RVIAILLTLSLFLLIFDCLVL) threads the bilayer. Residues 149–187 (EMFIDISLNIIDKSNLTLYLDESKTPYDKLFLLKTLLSL) lie on the Extracellular side of the membrane. N163 carries an N-linked (GlcNAc...) asparagine glycan. The chain crosses the membrane as a helical span at residues 188 to 208 (NSFIPFSLCLTSLLFLFLSLV). Residues 209-238 (RHTRNLKLSSLGSRDSSTEAHRRAMKMVMS) lie on the Cytoplasmic side of the membrane. Residues 239-259 (FLFLFIVHFFSLQVANWTFCI) traverse the membrane as a helical segment. The Extracellular portion of the chain corresponds to 260–265 (LGNNKY). A helical transmembrane segment spans residues 266–286 (TQFVMLALHAFPSCHSFILIL). Topologically, residues 287–314 (GNSKLRQTAVRLLWHLRNYTKRPNPLPL) are cytoplasmic.

Belongs to the G-protein coupled receptor T2R family.

The protein localises to the membrane. Receptor that may play a role in the perception of bitterness and is gustducin-linked. May play a role in sensing the chemical composition of the gastrointestinal content. The activity of this receptor may stimulate alpha gustducin, mediate PLC-beta-2 activation and lead to the gating of TRPM5. The sequence is that of Taste receptor type 2 member 42 (TAS2R42) from Papio hamadryas (Hamadryas baboon).